Here is a 369-residue protein sequence, read N- to C-terminus: Transforming protein Maf (369 aa).

Disordered stretches follow at residues 57–85 (STPMSTPCSSVPPSPSFSAPSPGSGTDQK) and 169–243 (GGAP…GLHF). Residues 173–183 (HYHHHHHHPHH) show a composition bias toward basic residues. The segment covering 184–193 (GGGGGGGGHP) has biased composition (gly residues). Over residues 194–211 (HGAAPGSAPPSSASSSAA) the composition is skewed to low complexity. Gly residues predominate over residues 212–226 (GSGGGGGGGGGGAGG). Positions 274-299 (RLKQKRRTLKNRGYAQSCRFKRVQQR) are basic motif. One can recognise a bZIP domain in the interval 274–337 (RLKQKRRTLK…DAYKEKYEKL (64 aa)). A leucine-zipper region spans residues 302–323 (LESEKNQLLQQVEHLKQEISRL). Positions 341–369 (GFRENGSSSDNPSSPEFFMYPRESSTTVM) are disordered. The span at 345–354 (NGSSSDNPSS) shows a compositional bias: polar residues.

The protein belongs to the bZIP family. Maf subfamily.

It is found in the host nucleus. Might be a transcriptional trans-activator. The chain is Transforming protein Maf (V-MAF) from Galliformes.